The sequence spans 428 residues: Adenylosuccinate synthetase (428 aa).

Residues 12–18 (GDEGKGK) and 40–42 (GHT) contribute to the GTP site. The active-site Proton acceptor is aspartate 13. Residues aspartate 13 and glycine 40 each coordinate Mg(2+). IMP is bound by residues 13–16 (DEGK), 38–41 (NAGH), threonine 128, arginine 142, glutamine 223, threonine 238, and arginine 302. Histidine 41 serves as the catalytic Proton donor. 298–304 (TTTGRPR) contributes to the substrate binding site. GTP is bound by residues arginine 304, 330-332 (SID), and 412-414 (SVG).

Belongs to the adenylosuccinate synthetase family. As to quaternary structure, homodimer. Mg(2+) is required as a cofactor.

The protein resides in the cytoplasm. It carries out the reaction IMP + L-aspartate + GTP = N(6)-(1,2-dicarboxyethyl)-AMP + GDP + phosphate + 2 H(+). It participates in purine metabolism; AMP biosynthesis via de novo pathway; AMP from IMP: step 1/2. Its function is as follows. Plays an important role in the de novo pathway of purine nucleotide biosynthesis. Catalyzes the first committed step in the biosynthesis of AMP from IMP. This is Adenylosuccinate synthetase from Geobacillus kaustophilus (strain HTA426).